The following is a 1317-amino-acid chain: uncharacterized protein (1317 aa).

Belongs to the oxoprolinase family.

This is an uncharacterized protein from Schizosaccharomyces pombe (strain 972 / ATCC 24843) (Fission yeast).